The following is a 465-amino-acid chain: UDP-N-acetylmuramate--L-alanine ligase (465 aa).

112 to 118 (GTHGKTT) contributes to the ATP binding site.

The protein belongs to the MurCDEF family.

The protein localises to the cytoplasm. The catalysed reaction is UDP-N-acetyl-alpha-D-muramate + L-alanine + ATP = UDP-N-acetyl-alpha-D-muramoyl-L-alanine + ADP + phosphate + H(+). It functions in the pathway cell wall biogenesis; peptidoglycan biosynthesis. Its function is as follows. Cell wall formation. The sequence is that of UDP-N-acetylmuramate--L-alanine ligase from Burkholderia mallei (strain NCTC 10247).